A 162-amino-acid chain; its full sequence is NADPH-dependent 7-cyano-7-deazaguanine reductase (162 aa).

Cys-53 functions as the Thioimide intermediate in the catalytic mechanism. Residue Asp-60 is the Proton donor of the active site. Residues 75–77 (VES) and 94–95 (HE) each bind substrate.

Belongs to the GTP cyclohydrolase I family. QueF type 1 subfamily.

The protein resides in the cytoplasm. The enzyme catalyses 7-aminomethyl-7-carbaguanine + 2 NADP(+) = 7-cyano-7-deazaguanine + 2 NADPH + 3 H(+). It functions in the pathway tRNA modification; tRNA-queuosine biosynthesis. In terms of biological role, catalyzes the NADPH-dependent reduction of 7-cyano-7-deazaguanine (preQ0) to 7-aminomethyl-7-deazaguanine (preQ1). In Exiguobacterium sibiricum (strain DSM 17290 / CCUG 55495 / CIP 109462 / JCM 13490 / 255-15), this protein is NADPH-dependent 7-cyano-7-deazaguanine reductase.